Here is a 313-residue protein sequence, read N- to C-terminus: Olfactory receptor 4M1 (313 aa).

Residues 1 to 25 lie on the Extracellular side of the membrane; the sequence is METANYTKVTEFVLTGLSQTREVQL. Asn5 carries an N-linked (GlcNAc...) asparagine glycan. The chain crosses the membrane as a helical span at residues 26–49; it reads VLFVIFLSFYLFILPGNILIICTI. Over 50–57 the chain is Cytoplasmic; it reads RLDPHLTS. Residues 58 to 79 traverse the membrane as a helical segment; sequence PMYFLLANLALLDIWYSSITAP. The Extracellular portion of the chain corresponds to 80 to 100; the sequence is KMLIDFFVERKIISFGGCIAQ. Cysteines 97 and 189 form a disulfide. A helical membrane pass occupies residues 101-120; sequence LFFLHFVGASEMFLLTVMAY. Residues 121–139 are Cytoplasmic-facing; that stretch reads DRYAAICRPLHYATIMNRR. A helical transmembrane segment spans residues 140–158; it reads LCCILVALSWMGGFIHSII. Residues 159 to 195 are Extracellular-facing; the sequence is QVALIVRLPFCGPNELDSYFCDITQVVRIACANTFPE. Residues 196–219 form a helical membrane-spanning segment; it reads ELVMICSSGLISVVCFIALLMSYA. Topologically, residues 220–237 are cytoplasmic; sequence FLLALLKKHSGSGENTNR. Residues 238 to 260 traverse the membrane as a helical segment; the sequence is AMSTCYSHITIVVLMFGPSIYIY. Residues 261 to 271 lie on the Extracellular side of the membrane; the sequence is ARPFDSFSLDK. The chain crosses the membrane as a helical span at residues 272–291; the sequence is VVSVFHTVIFPLLNPIIYTL. At 292 to 313 the chain is on the cytoplasmic side; it reads RNKEVKAAMRKVVTKYILCEEK.

This sequence belongs to the G-protein coupled receptor 1 family. Highly expressed in the testis and olfactory bulb.

Its subcellular location is the cell membrane. Functionally, olfactory receptor that acts as a receptor of Asprosin hormone, potentially at the surface of hepatocytes and may help to promote hepatocyte glucose release. The sequence is that of Olfactory receptor 4M1 from Homo sapiens (Human).